We begin with the raw amino-acid sequence, 439 residues long: Trigger factor (439 aa).

The PPIase FKBP-type domain maps to 175-260; sequence SDKLVIDYQN…VKSVYVMKGM (86 aa).

It belongs to the FKBP-type PPIase family. Tig subfamily.

It localises to the cytoplasm. The enzyme catalyses [protein]-peptidylproline (omega=180) = [protein]-peptidylproline (omega=0). In terms of biological role, involved in protein export. Acts as a chaperone by maintaining the newly synthesized protein in an open conformation. Functions as a peptidyl-prolyl cis-trans isomerase. This chain is Trigger factor, found in Ehrlichia chaffeensis (strain ATCC CRL-10679 / Arkansas).